We begin with the raw amino-acid sequence, 846 residues long: uncharacterized protein (846 aa).

Disordered regions lie at residues 159–217 (VPTF…INHI), 254–276 (CNLN…SNSN), 332–414 (NKLN…PLSI), 459–501 (GSSI…SNSL), 556–651 (QQQQ…NFND), and 803–846 (TTTT…NKNK). Positions 163-217 (HNQNQNNNNQNNNQNNNNNNNNNNNNNNNNNNNNNNNSQNNNNNQNNNNNHINHI) are enriched in low complexity. Low complexity predominate over residues 355–414 (LQSPNSQSLANSSANISSNALNQSSSSQQQQPQSTSQQQQQQHKMNSSSGNISPPLPLSI). Over residues 459–482 (GSSITPKNLSPLSSSAPNTPKQFA) the composition is skewed to polar residues. Low complexity-rich tracts occupy residues 483–501 (SLSS…SNSL), 568–642 (QQQQ…QPNN), and 811–846 (NNNN…NKNK).

This is an uncharacterized protein from Dictyostelium discoideum (Social amoeba).